Consider the following 226-residue polypeptide: Uracil-DNA glycosylase (226 aa).

Asp-64 acts as the Proton acceptor in catalysis.

The protein belongs to the uracil-DNA glycosylase (UDG) superfamily. UNG family.

Its subcellular location is the cytoplasm. The enzyme catalyses Hydrolyzes single-stranded DNA or mismatched double-stranded DNA and polynucleotides, releasing free uracil.. Functionally, excises uracil residues from the DNA which can arise as a result of misincorporation of dUMP residues by DNA polymerase or due to deamination of cytosine. The protein is Uracil-DNA glycosylase of Vibrio campbellii (strain ATCC BAA-1116).